The primary structure comprises 213 residues: Protein big brother (213 aa).

The protein belongs to the CBF-beta family.

It is found in the nucleus. In terms of biological role, regulates the DNA-binding properties of Runt. The polypeptide is Protein big brother (Bgb) (Drosophila melanogaster (Fruit fly)).